The primary structure comprises 503 residues: Maturase K (503 aa).

The protein belongs to the intron maturase 2 family. MatK subfamily.

The protein localises to the plastid. It localises to the chloroplast. Its function is as follows. Usually encoded in the trnK tRNA gene intron. Probably assists in splicing its own and other chloroplast group II introns. The polypeptide is Maturase K (Cercocarpus betuloides (Mountain mahogany)).